A 301-amino-acid polypeptide reads, in one-letter code: uncharacterized protein (301 aa).

The first 25 residues, 1–25, serve as a signal peptide directing secretion; sequence MKFKNTLSIFKILIILFSFYNVAFS. Residues 26–279 lie on the Extracellular side of the membrane; that stretch reads DDTEKYTFKG…STTGSKDSST (254 aa). A disordered region spans residues 174–281; sequence LYTGSSNTPN…TGSKDSSTGN (108 aa). N-linked (GlcNAc...) asparagine glycans are attached at residues asparagine 191, asparagine 212, asparagine 234, and asparagine 241. Residues 204–234 are compositionally biased toward low complexity; the sequence is SSSDSTNSNSSSTDTASSSPSSSPSSSPSPN. Positions 254 to 281 are enriched in low complexity; sequence GGVETSTAGSSTGTTSSTTGSKDSSTGN. The helical transmembrane segment at 280 to 300 threads the bilayer; it reads GNSILPTLIIVTFFVLTLVIM. Residue serine 301 is a topological domain, cytoplasmic.

Its subcellular location is the membrane. This is an uncharacterized protein from Dictyostelium discoideum (Social amoeba).